Reading from the N-terminus, the 59-residue chain is Insertion element IS986 uncharacterized 6.6 kDa protein (59 aa).

Residues 1 to 26 form a disordered region; it reads MRKWVRQAQVDAGARPGTTTEESAEI.

It belongs to the transposase 8 family.

This Mycobacterium tuberculosis protein is Insertion element IS986 uncharacterized 6.6 kDa protein.